Here is a 147-residue protein sequence, read N- to C-terminus: Ribonuclease H (147 aa).

Residues 5–141 enclose the RNase H type-1 domain; sequence ARKQITLYSD…CDELARNEAE (137 aa). 4 residues coordinate Mg(2+): aspartate 14, glutamate 52, aspartate 74, and aspartate 133.

This sequence belongs to the RNase H family. In terms of assembly, monomer. Mg(2+) serves as cofactor.

Its subcellular location is the cytoplasm. It catalyses the reaction Endonucleolytic cleavage to 5'-phosphomonoester.. In terms of biological role, endonuclease that specifically degrades the RNA of RNA-DNA hybrids. The chain is Ribonuclease H from Sulfurovum sp. (strain NBC37-1).